Here is a 299-residue protein sequence, read N- to C-terminus: 4-hydroxybenzoate octaprenyltransferase (299 aa).

7 consecutive transmembrane segments (helical) span residues 34–54 (IGSL…ADGL), 57–77 (LWTL…GCVI), 108–128 (LWVF…LNWL), 163–183 (WGIP…GWLL), 221–241 (FDLV…ALVD), 245–265 (DLGA…AYEF), and 277–297 (FRAF…IAVA).

It belongs to the UbiA prenyltransferase family. Mg(2+) serves as cofactor.

It is found in the cell inner membrane. The catalysed reaction is all-trans-octaprenyl diphosphate + 4-hydroxybenzoate = 4-hydroxy-3-(all-trans-octaprenyl)benzoate + diphosphate. It functions in the pathway cofactor biosynthesis; ubiquinone biosynthesis. Catalyzes the prenylation of para-hydroxybenzoate (PHB) with an all-trans polyprenyl group. Mediates the second step in the final reaction sequence of ubiquinone-8 (UQ-8) biosynthesis, which is the condensation of the polyisoprenoid side chain with PHB, generating the first membrane-bound Q intermediate 3-octaprenyl-4-hydroxybenzoate. The polypeptide is 4-hydroxybenzoate octaprenyltransferase (Xanthomonas oryzae pv. oryzae (strain MAFF 311018)).